The following is a 504-amino-acid chain: Maturase K (504 aa).

The protein belongs to the intron maturase 2 family. MatK subfamily.

It is found in the plastid. The protein resides in the chloroplast. Functionally, usually encoded in the trnK tRNA gene intron. Probably assists in splicing its own and other chloroplast group II introns. This Hamamelis mollis (Chinese witch hazel) protein is Maturase K.